A 551-amino-acid polypeptide reads, in one-letter code: MAGDLSAGFFMEELNTYRQKQGVVLKYQELPNSGPPHDRRFTFQVIIDGREFPEGEGRSKKEAKNAAAKLAVEILNKEKKAVSPLLLTTTNSSEGLSMGNYIGLINRIAQKKRLTVNYEQCASGVHGPEGFHYKCKMGQKEYSIGTGSTKQEAKQLAAKLAYLQILSEETSVKSDYLSSGSFATTCESQSNSLVTSTLASESSSEGDFSADTSEINSNSDSLNSSSLLMNGLRNNQRKAKRSLAPRFDLPDMKETKYTVDKRFGMDFKEIELIGSGGFGQVFKAKHRIDGKTYVIKRVKYNNEKAEREVKALAKLDHVNIVHYNGCWDGFDYDPETSDDSLESSDYDPENSKNSSRSKTKCLFIQMEFCDKGTLEQWIEKRRGEKLDKVLALELFEQITKGVDYIHSKKLIHRDLKPSNIFLVDTKQVKIGDFGLVTSLKNDGKRTRSKGTLRYMSPEQISSQDYGKEVDLYALGLILAELLHVCDTAFETSKFFTDLRDGIISDIFDKKEKTLLQKLLSKKPEDRPNTSEILRTLTVWKKSPEKNERHTC.

N-acetylalanine is present on Ala-2. A (Microbial infection) Interaction with HCV NS5A region spans residues 2-180 (AGDLSAGFFM…SVKSDYLSSG (179 aa)). Positions 9–77 (FFMEELNTYR…AKLAVEILNK (69 aa)) constitute a DRBM 1 domain. Lys-69 is covalently cross-linked (Glycyl lysine isopeptide (Lys-Gly) (interchain with G-Cter in ISG15)). A Phosphoserine modification is found at Ser-83. A phosphothreonine; by autocatalysis mark is found at Thr-88, Thr-89, and Thr-90. The region spanning 100-167 (NYIGLINRIA…AKLAYLQILS (68 aa)) is the DRBM 2 domain. At Tyr-101 the chain carries Phosphotyrosine; by autocatalysis. Residue Lys-159 forms a Glycyl lysine isopeptide (Lys-Gly) (interchain with G-Cter in ISG15) linkage. Tyr-162 bears the Phosphotyrosine; by autocatalysis mark. Residues 202-215 (SSSEGDFSADTSEI) are compositionally biased toward polar residues. A disordered region spans residues 202–222 (SSSEGDFSADTSEINSNSDSL). Ser-242 carries the phosphoserine; by autocatalysis modification. Thr-255 and Thr-258 each carry phosphothreonine; by autocatalysis. The interval 266-362 (DFKEIELIGS…NSSRSKTKCL (97 aa)) is dimerization. Positions 266-551 (DFKEIELIGS…SPEKNERHTC (286 aa)) are interaction with TRAF5. Residues 267–538 (FKEIELIGSG…TSEILRTLTV (272 aa)) form the Protein kinase domain. 273-281 (IGSGGFGQV) is an ATP binding site. Tyr-293 bears the Phosphotyrosine; by autocatalysis mark. An ATP-binding site is contributed by Lys-296. A run of 2 repeats spans residues 331-343 (DYDPETSDDSLES) and 345-357 (DYDPENSKNSSRS). Positions 331 to 357 (DYDPETSDDSLESSDYDPENSKNSSRS) are 2 X 13 AA approximate repeats. Residues 379-496 (EKRRGEKLDK…TAFETSKFFT (118 aa)) form an interaction with EIF2S1/EIF-2ALPHA region. Catalysis depends on Asp-414, which acts as the Proton acceptor. Position 432 (Asp-432) interacts with Mg(2+). Thr-446 and Thr-451 each carry phosphothreonine; by autocatalysis. Residues Ser-456 and Ser-542 each carry the phosphoserine modification.

Belongs to the protein kinase superfamily. Ser/Thr protein kinase family. GCN2 subfamily. Homodimer. Interacts with STRBP. Interacts with DNAJC3. Forms a complex with FANCA, FANCC, FANCG and HSP70. Interacts with ADAR/ADAR1. Interacts with IRS1. The inactive form interacts with NCK1 and GSN. Interacts (via the kinase catalytic domain) with STAT3 (via SH2 domain), TRAF2 (C-terminus), TRAF5 (C-terminus) and TRAF6 (C-terminus). Interacts with MAP2K6, IKBKB/IKKB, NPM1, TARBP2, NLRP1, NLRP3, NLRC4 and AIM2. Interacts (via DRBM 1 domain) with DUS2L (via DRBM domain). Interacts with DHX9 (via N-terminus) and this interaction is dependent upon activation of the kinase. Interacts with EIF2S1/EIF-2ALPHA; this interaction induces a conformational change in EIF2S1 and its phosphorylation by EIF2AK2. In terms of assembly, (Microbial infection) Interacts with human cytomegalovirus (HCMV) TRS1; this interaction retains EIF2AK2 to the nucleus and prevents its activation. As to quaternary structure, (Microbial infection) Interacts with vaccinia virus protein K3 (K3L); this interaction inhibits EIF2AK2. (Microbial infection) Interacts with human herpes simplex virus 1 (HHV-1) protein US11 in an RNA-dependent manner. In terms of assembly, (Microbial infection) The inactive form interacts with Toscana virus (TOS) NSS. As to quaternary structure, (Microbial infection) Interacts with herpes virus 8 protein v-IRF2; this interaction inhibits EIF2AK2 activation. (Microbial infection) Interacts with vaccinia protein E3. In terms of assembly, (Microbial infection) Interacts (via N-terminus) with Hepatitis C virus (HCV) mature core protein (via N-terminus); this interaction induces the autophosphorylation of EIF2AK2. As to quaternary structure, (Microbial infection) Interacts with Hepatitis C virus (HCV) non-structural protein 5A (NS5A); this interaction leads to disruption of EIF2AK2 dimerization by NS5A. (Microbial infection) Interacts with Hepatitis C virus (HCV) envelope glycoprotein E2; this interaction inhibits EIF2AK2 and blocks its inhibitory effect on protein synthesis and cell growth. In terms of assembly, (Microbial infection) Interacts with human respiratory syncytial virus (HRSV) nucleoprotein; this interaction inhibits EIF2AK2 phosphorylation of EIF2S1 and blocks EIF2AK2-mediated translation shutoff. As to quaternary structure, (Microbial infection) Interacts with human herpesvirus 8 protein MTA/ORF57; this interaction inhibits stress granule formation. Requires Mg(2+) as cofactor. In terms of processing, autophosphorylated on several Ser, Thr and Tyr residues. Autophosphorylation of Thr-451 is dependent on Thr-446 and is stimulated by dsRNA binding and dimerization. Autophosphorylation apparently leads to the activation of the kinase. Tyrosine autophosphorylation is essential for efficient dsRNA-binding, dimerization, and kinase activation. Highly expressed in thymus, spleen and bone marrow compared to non-hematopoietic tissues such as small intestine, liver, or kidney tissues. Colocalizes with GSK3B and TAU in the Alzheimer disease (AD) brain. Elevated levels seen in breast and colon carcinomas, and which correlates with tumor progression and invasiveness or risk of progression.

It localises to the cytoplasm. The protein localises to the nucleus. The protein resides in the perinuclear region. It carries out the reaction L-seryl-[protein] + ATP = O-phospho-L-seryl-[protein] + ADP + H(+). It catalyses the reaction L-threonyl-[protein] + ATP = O-phospho-L-threonyl-[protein] + ADP + H(+). The enzyme catalyses L-tyrosyl-[protein] + ATP = O-phospho-L-tyrosyl-[protein] + ADP + H(+). Initially produced in an inactive form and is activated by binding to viral dsRNA, which causes dimerization and autophosphorylation in the activation loop and stimulation of function. ISGylation can activate it in the absence of viral infection. Can also be activated by heparin, pro-inflammatory stimuli, growth factors, cytokines, oxidative stress and the cellular protein PRKRA. Activity is markedly stimulated by manganese ions. Activation is blocked by the viral components HIV-1 Tat protein and large amounts of HIV-1 trans-activation response (TAR) RNA element as well as by the cellular proteins TARBP2, DUS2L, NPM1, NCK1 and ADAR. Down-regulated by Toscana virus (TOS) and Rift valley fever virus (RVFV) NSS which promote its proteasomal degradation. Inhibited by vaccinia virus protein E3, probably via dsRNA sequestering. Functionally, IFN-induced dsRNA-dependent serine/threonine-protein kinase that phosphorylates the alpha subunit of eukaryotic translation initiation factor 2 (EIF2S1/eIF-2-alpha) and plays a key role in the innate immune response to viral infection. Inhibits viral replication via the integrated stress response (ISR): EIF2S1/eIF-2-alpha phosphorylation in response to viral infection converts EIF2S1/eIF-2-alpha in a global protein synthesis inhibitor, resulting to a shutdown of cellular and viral protein synthesis, while concomitantly initiating the preferential translation of ISR-specific mRNAs, such as the transcriptional activator ATF4. Exerts its antiviral activity on a wide range of DNA and RNA viruses including hepatitis C virus (HCV), hepatitis B virus (HBV), measles virus (MV) and herpes simplex virus 1 (HHV-1). Also involved in the regulation of signal transduction, apoptosis, cell proliferation and differentiation: phosphorylates other substrates including p53/TP53, PPP2R5A, DHX9, ILF3, IRS1 and the HHV-1 viral protein US11. In addition to serine/threonine-protein kinase activity, also has tyrosine-protein kinase activity and phosphorylates CDK1 at 'Tyr-4' upon DNA damage, facilitating its ubiquitination and proteasomal degradation. Either as an adapter protein and/or via its kinase activity, can regulate various signaling pathways (p38 MAP kinase, NF-kappa-B and insulin signaling pathways) and transcription factors (JUN, STAT1, STAT3, IRF1, ATF3) involved in the expression of genes encoding pro-inflammatory cytokines and IFNs. Activates the NF-kappa-B pathway via interaction with IKBKB and TRAF family of proteins and activates the p38 MAP kinase pathway via interaction with MAP2K6. Can act as both a positive and negative regulator of the insulin signaling pathway (ISP). Negatively regulates ISP by inducing the inhibitory phosphorylation of insulin receptor substrate 1 (IRS1) at 'Ser-312' and positively regulates ISP via phosphorylation of PPP2R5A which activates FOXO1, which in turn up-regulates the expression of insulin receptor substrate 2 (IRS2). Can regulate NLRP3 inflammasome assembly and the activation of NLRP3, NLRP1, AIM2 and NLRC4 inflammasomes. Plays a role in the regulation of the cytoskeleton by binding to gelsolin (GSN), sequestering the protein in an inactive conformation away from actin. The chain is Interferon-induced, double-stranded RNA-activated protein kinase (EIF2AK2) from Homo sapiens (Human).